The following is a 100-amino-acid chain: Cell division protein DrpB (100 aa).

Residues 1 to 16 (MEYGSTKMEERLSRSP) are Cytoplasmic-facing. A helical transmembrane segment spans residues 17–37 (GGKLALWAFYTWCGYFVWAMA). Residues 38–64 (RYIWVMSRIPDAPVSGFESDLGSTAGK) are Periplasmic-facing. The helical transmembrane segment at 65-85 (WLGALVGFLFMALVGALLGSI) threads the bilayer. Topologically, residues 86–100 (AWYTRPRPARSRRYE) are cytoplasmic.

This sequence belongs to the DrpB family. As to quaternary structure, bacterial adenylate cyclase hybrid (BACTH) studies show interaction of this protein with DamX, FtsI, FtsN, FtsQ, YmgF, DedD, FtsA and MalF, as well as weaker interactions with DedD, MalG and PBP2, but this assay often generates false positive results.

It localises to the cell inner membrane. Its function is as follows. A non-essential division protein that localizes to the septal ring in low ionic strength medium. In terms of biological role, localizes to the septal ring in about 30% of observed cells before cell constriction occurs; localization occurs in low ionic strength medium (0 NaCl) and requires FtsZ but not FtsEX. Overexpression partially restores correct FtsI localization to the division septum in an ftsEX deletion. Isolated as a multicopy suppressor of an ftsEX deletion mutant; it does not suppress other cell division defects (e.g. ftsA, ftsI, ftsQ or ftsZ). This Escherichia coli (strain K12) protein is Cell division protein DrpB.